A 295-amino-acid chain; its full sequence is Pyridoxal 5'-phosphate synthase subunit PdxS (295 aa).

Residue Asp25 participates in D-ribose 5-phosphate binding. Residue Lys82 is the Schiff-base intermediate with D-ribose 5-phosphate of the active site. Gly154 is a D-ribose 5-phosphate binding site. Residue Arg166 coordinates D-glyceraldehyde 3-phosphate. D-ribose 5-phosphate contacts are provided by residues Gly215 and 236 to 237; that span reads GS.

It belongs to the PdxS/SNZ family. In the presence of PdxT, forms a dodecamer of heterodimers.

It catalyses the reaction aldehydo-D-ribose 5-phosphate + D-glyceraldehyde 3-phosphate + L-glutamine = pyridoxal 5'-phosphate + L-glutamate + phosphate + 3 H2O + H(+). It functions in the pathway cofactor biosynthesis; pyridoxal 5'-phosphate biosynthesis. Its function is as follows. Catalyzes the formation of pyridoxal 5'-phosphate from ribose 5-phosphate (RBP), glyceraldehyde 3-phosphate (G3P) and ammonia. The ammonia is provided by the PdxT subunit. Can also use ribulose 5-phosphate and dihydroxyacetone phosphate as substrates, resulting from enzyme-catalyzed isomerization of RBP and G3P, respectively. The polypeptide is Pyridoxal 5'-phosphate synthase subunit PdxS (Oceanobacillus iheyensis (strain DSM 14371 / CIP 107618 / JCM 11309 / KCTC 3954 / HTE831)).